The following is a 664-amino-acid chain: DNA mismatch repair protein MutL (664 aa).

Belongs to the DNA mismatch repair MutL/HexB family.

In terms of biological role, this protein is involved in the repair of mismatches in DNA. It is required for dam-dependent methyl-directed DNA mismatch repair. May act as a 'molecular matchmaker', a protein that promotes the formation of a stable complex between two or more DNA-binding proteins in an ATP-dependent manner without itself being part of a final effector complex. The sequence is that of DNA mismatch repair protein MutL from Clostridium beijerinckii (strain ATCC 51743 / NCIMB 8052) (Clostridium acetobutylicum).